A 459-amino-acid polypeptide reads, in one-letter code: Antizyme inhibitor 2 (459 aa).

The interval 117–140 (QVAQIKYAAKHGVRLLSFDNEVEL) is necessary for polyamine uptake stimulation.

It belongs to the Orn/Lys/Arg decarboxylase class-II family. ODC antizyme inhibitor subfamily. As to quaternary structure, monomer. Interacts with OAZ1, OAZ2 and OAZ3; this interaction disrupts the interaction between the antizyme and ODC1. Does not form a heterodimer with ODC1. In terms of processing, ubiquitinated, leading to its proteasomal degradation; a process that is reduced in presence of antizymes. May also be degraded through the lysosomal degradative pathway in a proteasomal-independent manner. Expressed in the medulla and chromaffin cells of the adrenal gland. Expressed in the Langerhans islets of the pancreas. Expressed in the inner part of the seminiferous tubules and in spermatozoa located in the lumen of the epididymis of the testis. Expressed in the cortex, hippocampus and cerebellum of the brain. Expressed in normal and neoplastic mast cells (MC) (at protein level). Expressed in testis, pancreas and brain. Expressed throughout the differentiation process from spermatids to spermatozoa in the inner part of the seminiferous tubules. Expressed in the kidney: expressed in the superficial (Cs) and the deep layer (Cd) of the cortex region and in the outer stripe (OS), inner stripe (IS) and the inner medulla papilla (IM) of the medulla region.

The protein localises to the nucleus. The protein resides in the cytoplasm. It is found in the perinuclear region. It localises to the membrane. Its subcellular location is the cytoplasmic vesicle. The protein localises to the endoplasmic reticulum-Golgi intermediate compartment. The protein resides in the golgi apparatus. It is found in the cis-Golgi network. It localises to the trans-Golgi network. Its subcellular location is the cytoplasmic granule. The protein localises to the cell projection. The protein resides in the axon. It is found in the dendrite. It localises to the perikaryon. Its function is as follows. Antizyme inhibitor (AZI) protein that positively regulates ornithine decarboxylase (ODC) activity and polyamine uptake. AZI is an enzymatically inactive ODC homolog that counteracts the negative effect of ODC antizymes (AZs) OAZ1, OAZ2 and OAZ3 on ODC activity by competing with ODC for antizyme-binding. Inhibits antizyme-dependent ODC degradation and releases ODC monomers from their inactive complex with antizymes, leading to formation of the catalytically active ODC homodimer and restoring polyamine production. Participates in the morphological integrity of the trans-Golgi network (TGN) and functions as a regulator of intracellular secretory vesicle trafficking. This is Antizyme inhibitor 2 (Azin2) from Mus musculus (Mouse).